Here is a 236-residue protein sequence, read N- to C-terminus: Small ribosomal subunit protein uS2c (236 aa).

The protein belongs to the universal ribosomal protein uS2 family.

It is found in the plastid. The protein resides in the chloroplast. The protein is Small ribosomal subunit protein uS2c (rps2) of Aethionema grandiflorum (Persian stone-cress).